Reading from the N-terminus, the 203-residue chain is SPbeta prophage-derived uncharacterized protein YouA (203 aa).

The tract at residues 1–23 (MAFLNQDGDKYTSAKDDGTGNPI) is disordered. A compositionally biased stretch (basic and acidic residues) spans 7 to 18 (DGDKYTSAKDDG).

The sequence is that of SPbeta prophage-derived uncharacterized protein YouA (youA) from Bacillus subtilis (strain 168).